Here is a 4226-residue protein sequence, read N- to C-terminus: Guanylate cyclase alpha (4226 aa).

The Cytoplasmic segment spans residues 1–104; sequence MSDSKKHYNE…SFIFKGLYEQ (104 aa). Residues 105 to 125 form a helical membrane-spanning segment; that stretch reads FLRLPNIWFLLISLLEFIPQY. The Extracellular segment spans residues 126–131; that stretch reads QNLSNY. The N-linked (GlcNAc...) asparagine glycan is linked to Asn127. The helical transmembrane segment at 132-152 threads the bilayer; that stretch reads MYYSKHSSFFLLLFFICVSII. At 153 to 337 the chain is on the cytoplasmic side; it reads KNIYEDSRRS…LGYVNKELNS (185 aa). A helical transmembrane segment spans residues 338 to 358; the sequence is YTIIGLIFTFICVFISVLFKW. Residues 359–392 are Extracellular-facing; sequence TEDDKFRNGSHFFLITVKDNICESIVKYTLLYSN. Asn366 is a glycosylation site (N-linked (GlcNAc...) asparagine). The helical transmembrane segment at 393–413 threads the bilayer; it reads IIPISILISVDLISILQSILI. The Cytoplasmic segment spans residues 414 to 2083; it reads ENDNHISTFE…FIYGSKHLYT (1670 aa). Disordered regions lie at residues 552-572, 832-904, 968-989, and 1740-1765; these read EHSQ…NNIC, SSKN…SNND, INNN…KSSS, and NINK…NNSN. Low complexity predominate over residues 558–570; it reads DNNNNNDNNNNNN. The span at 838–847 shows a compositional bias: acidic residues; sequence TLDDPTELIS. Positions 854–873 are enriched in basic and acidic residues; the sequence is LRDKYEHTSDKKNDTNKNRD. Residues 874–904 are compositionally biased toward low complexity; sequence GANNSNNNNNKDVSNNKNKNNNNYNYNSNND. Residues 1745 to 1754 are compositionally biased toward basic and acidic residues; that stretch reads YKYDKNDKHN. Residues 1755 to 1765 show a composition bias toward low complexity; it reads NNNNNNNNNSN. The chain crosses the membrane as a helical span at residues 2084–2104; that stretch reads ISIILYWNFFKNILLILPIFF. At 2105-2119 the chain is on the extracellular side; it reads YQAYASWSCVKIYPE. A helical transmembrane segment spans residues 2120-2140; that stretch reads LLYTFFSIFWVFIPIIYYMFL. Residues 2141 to 2169 are Cytoplasmic-facing; that stretch reads QHNLNYDILYNIPLFYALSRRRYNMNCFK. Residues 2170–2190 traverse the membrane as a helical segment; sequence FLPWIFEAIFYSMIIYFFAYA. Residues 2191 to 2202 are Extracellular-facing; sequence ALKENSHLNNGE. The chain crosses the membrane as a helical span at residues 2203 to 2223; that stretch reads VITINTFGNICFIGCLLISIL. Residues 2224–2235 are Cytoplasmic-facing; it reads RLFLEGSLWSPS. Residues 2236 to 2256 form a helical membrane-spanning segment; it reads ILITCFGCFLFVFFPSLLFIC. Topologically, residues 2257–2275 are extracellular; sequence FAYLSNEYIREVFRQTFLW. Residues 2276–2296 form a helical membrane-spanning segment; it reads APLYVLLILWFSTCIISYIFI. The Cytoplasmic portion of the chain corresponds to 2297–2787; sequence NFTKSILFPN…QIHKKNKFYK (491 aa). The disordered stretch occupies residues 2477–2505; sequence NNDNNNDDNDNDNNNNNNNNDNYNNNDHN. Low complexity predominate over residues 2488–2502; the sequence is DNNNNNNNNDNYNNN. A helical transmembrane segment spans residues 2788–2808; that stretch reads TFTPWYRFIFLLLGVFFLYVW. The Extracellular portion of the chain corresponds to 2809–2828; it reads KLESSLSQLWNMPSDASTDV. The chain crosses the membrane as a helical span at residues 2829 to 2849; it reads FILFLSLLLELVLLAATVTTF. At 2850–2860 the chain is on the cytoplasmic side; it reads FSNIFIENFNK. A helical transmembrane segment spans residues 2861-2881; sequence IISAVVILIITYHVVSYSVTH. Over 2882 to 2900 the chain is Extracellular; it reads IDGVFQAVLFPLYTFVILR. The helical transmembrane segment at 2901-2921 threads the bilayer; that stretch reads LPFVNAVLCNIIFLGLFIIRF. At 2922–2930 the chain is on the cytoplasmic side; sequence NGDHFLDKK. A helical membrane pass occupies residues 2931–2951; the sequence is GLAHYIPLFIGVDVFVGFVGY. At 2952 to 3008 the chain is on the extracellular side; it reads RLEYNQRKNFLLEYSVESSRRKQREILNTMLPPFVVDEMIYSELNEEGIPISLKAED. The helical transmembrane segment at 3009–3029 threads the bilayer; that stretch reads ISTVTIIFCDIYDFQNIVASI. Positions 3013–3270 constitute a Guanylate cyclase 1 domain; it reads TIIFCDIYDF…DTVNTASRMK (258 aa). The Cytoplasmic portion of the chain corresponds to 3030-3738; it reads EPTRLVEVLD…SNINSIEQAL (709 aa). 2 disordered regions span residues 3077-3150 and 3201-3230; these read EDEL…FEED and DAND…NNKP. 2 stretches are compositionally biased toward low complexity: residues 3083–3098 and 3108–3138; these read NKYS…NYYY and NNNN…NNVN. Positions 3140-3150 are enriched in acidic residues; sequence SDDDGDFFEED. Positions 3201–3220 are enriched in basic and acidic residues; it reads DANDDTHNVNDSFNNDKAEN. A helical membrane pass occupies residues 3739 to 3759; the sequence is IIFLVTFVMQTLISSTVSIVF. Over 3760–3773 the chain is Extracellular; sequence IDHKRATQTLHINY. The chain crosses the membrane as a helical span at residues 3774-3794; sequence FAYWSVRSVYTFFGFVLWLLF. Residues 3795–3811 are Cytoplasmic-facing; it reads HYRTRPEVSSLLNIKWM. Residues 3812 to 3832 form a helical membrane-spanning segment; the sequence is IFFLNLLFISAACVFSIAYLW. The Extracellular segment spans residues 3833 to 3840; the sequence is AISETDQT. Residues 3841-3861 form a helical membrane-spanning segment; it reads TSYTIWMTNDTIEFFFYLVIL. The Cytoplasmic segment spans residues 3862-3871; that stretch reads HHNTGMLFQT. The chain crosses the membrane as a helical span at residues 3872–3892; it reads CILVDLLFITMSLTFIATSVV. Residue Lys3893 is a topological domain, extracellular. The helical transmembrane segment at 3894–3914 threads the bilayer; sequence TITTDSTVLLIPWYVAFNLIS. Residues 3915 to 4226 are Cytoplasmic-facing; that stretch reads TYCKESIDRR…INVNDRQSNL (312 aa). Residues 3970-4104 form the Guanylate cyclase 2 domain; sequence TFLFADICGF…IDVLTGNLME (135 aa). Mg(2+) is bound by residues Asp3975, Ile3976, and Asp4019.

It in the N-terminal section; belongs to the cation transport ATPase (P-type) (TC 3.A.3) family. Type IV subfamily. This sequence in the C-terminal section; belongs to the adenylyl cyclase class-4/guanylyl cyclase family. The cofactor is Mg(2+). Mn(2+) is required as a cofactor.

It is found in the cell membrane. Its subcellular location is the cytoplasmic vesicle membrane. It catalyses the reaction GTP = 3',5'-cyclic GMP + diphosphate. Functionally, catalyzes the synthesis of the second messenger cGMP from GTP. In asexual blood stage schizonts, required for cGMP production which is essential for PKG activation, PKG-dependent Ca(2+) release, and ultimately merozoite egress from host erythrocytes. This Plasmodium falciparum (isolate 3D7) protein is Guanylate cyclase alpha.